Here is an 806-residue protein sequence, read N- to C-terminus: Lon protease (806 aa).

The 194-residue stretch at 13–206 (LPMMPIRDVV…RVAEMLDIEI (194 aa)) folds into the Lon N-terminal domain. An ATP-binding site is contributed by 356-363 (GPPGVGKT). In terms of domain architecture, Lon proteolytic spans 599–780 (KNEIGAATGL…DEVLKIALER (182 aa)). Residues S686 and K729 contribute to the active site.

This sequence belongs to the peptidase S16 family. In terms of assembly, homohexamer. Organized in a ring with a central cavity.

It is found in the cytoplasm. It catalyses the reaction Hydrolysis of proteins in presence of ATP.. In terms of biological role, ATP-dependent serine protease that mediates the selective degradation of mutant and abnormal proteins as well as certain short-lived regulatory proteins. Required for cellular homeostasis and for survival from DNA damage and developmental changes induced by stress. Degrades polypeptides processively to yield small peptide fragments that are 5 to 10 amino acids long. Binds to DNA in a double-stranded, site-specific manner. This chain is Lon protease, found in Solibacter usitatus (strain Ellin6076).